A 611-amino-acid chain; its full sequence is Developmental and secondary metabolism regulator veA (611 aa).

Disordered regions lie at residues 1–57 (MNRK…RPVD), 222–497 (RRRE…ASFD), and 511–611 (LEAS…PGHA). The segment covering 14-23 (KSSATRTTND) has biased composition (polar residues). Residues 24 to 216 (GRAITYEMQV…AEQGCRVRIR (193 aa)) form the Velvet domain. A Nuclear localization signal motif is present at residues 38–43 (QRARAC). Low complexity predominate over residues 242-254 (AARARASATPDPS). Polar residues predominate over residues 274–290 (SASNASHQSLGSISRRP). Positions 330–340 (YPPNQFVQQQP) are enriched in low complexity. A compositionally biased stretch (pro residues) spans 341–361 (PMQPPLPQYQPPNYPAPPPPV). A compositionally biased stretch (low complexity) spans 362 to 377 (TAAQQPQPAQSYYNYP). The segment covering 419-434 (RNSQQIPPTSQPTAYT) has biased composition (polar residues). Composition is skewed to low complexity over residues 435–452 (QPMQPQYAAQMPPAQHYQ) and 461–471 (QASQHSSYSSM). Residues 455–499 (PPPPPSQASQHSSYSSMDLYNSRPAPIEPHHHGNTPASKASFDLP) form a PEST region. The span at 511–533 (LEASSPTSVAPTNAYFSGGQTPI) shows a compositional bias: polar residues.

Belongs to the velvet family. VeA subfamily. In terms of assembly, component of the heterotrimeric velvet complex composed of laeA, veA and velB; VeA acting as a bridging protein between laeA and velB.

The protein localises to the nucleus. The protein resides in the cytoplasm. Component of the velvet transcription factor complex that controls sexual/asexual developmental ratio in response to light, promoting sexual development in the darkness while stimulating asexual sporulation under illumination. The velvet complex hat acts as a global regulator for secondary metabolite gene expression. Controls the expression of the dothistromin gene cluster. Regulates hyphal growth and pigment formation. Acts as a positive regulator of virulence. This chain is Developmental and secondary metabolism regulator veA, found in Dothistroma septosporum (strain NZE10 / CBS 128990) (Red band needle blight fungus).